Reading from the N-terminus, the 625-residue chain is MASSSTLLNDDWKQGLAAPPKDLRPQTEDVTATQGSRFEDFGLRRELLMGIYTAGFERPSPIQEQAIPMALTGRDILARAKNGTGKTASFIIPTLNRINTSLSHIQALILVPTRELALQTSQVCKTLGAHIPNLQVMITTGGTTLRDDILRLQQPVHILVGTPGRILDLGSKGIASLNKCGVFVMDEADKLLSEDFMPVIEQTLALCPQERQVMLFSATFPWTVKEFKDQHMVQPYEINLMDELTLKGVTQYYAYVEESQKVHCLNTLFSKLQINQSIIFCNSTNRVELLAKKVTELGYSCFYSHAKMQQAHRNRVFHDFRNGMTRNLVCSDLLTRGIDIQAVNVVINFDFPRTAESYLHRIGRSGRFGHLGLAISLLTLEDRHNLYRIESELGTEIAPIPAVIDPVLYVAPAMVEEERESPPPKPAAIAAPPAQQQPQQRQRQHPPVPSHQAAQQSPAAAPVQQQQQQQQQQQQQQQQQQPQYQQAYGQGPPQPQALFQQQPNSSPAPAPLPSYSQQAPTQAQGPAPVQSPPPAPSTQPQAPAQTPIQGQIPPTQPRAQQQGQQQPGQPGQAQGQSQPNRRPNTGGFRGNGRGQGHRGRGRGRGGQPGQPGAGAGAGQSQQAQA.

Residues 1 to 34 (MASSSTLLNDDWKQGLAAPPKDLRPQTEDVTATQ) form a disordered region. Positions 36-64 (SRFEDFGLRRELLMGIYTAGFERPSPIQE) match the Q motif motif. Residues 67–238 (IPMALTGRDI…DQHMVQPYEI (172 aa)) enclose the Helicase ATP-binding domain. An ATP-binding site is contributed by 80–87 (AKNGTGKT). The DEAD box signature appears at 186 to 189 (DEAD). A Helicase C-terminal domain is found at 248-408 (GVTQYYAYVE…PIPAVIDPVL (161 aa)). Residues 416–625 (EEERESPPPK…GAGQSQQAQA (210 aa)) form a disordered region. Composition is skewed to low complexity over residues 427 to 441 (AAIA…PQQR), 450 to 505 (SHQA…QPNS), 513 to 528 (PSYS…GPAP), and 538 to 586 (TQPQ…PNTG). The span at 604–617 (RGGQPGQPGAGAGA) shows a compositional bias: gly residues.

Belongs to the DEAD box helicase family. DDX6/DHH1 subfamily.

It localises to the cytoplasm. Its subcellular location is the P-body. It catalyses the reaction ATP + H2O = ADP + phosphate + H(+). ATP-dependent RNA helicase involved in mRNA turnover, and more specifically in mRNA decapping. Is involved in G1/S DNA-damage checkpoint recovery, probably through the regulation of the translational status of a subset of mRNAs. May also have a role in translation and mRNA nuclear export. The chain is ATP-dependent RNA helicase DHH1 (DHH1) from Cryptococcus neoformans var. neoformans serotype D (strain B-3501A) (Filobasidiella neoformans).